The chain runs to 795 residues: Phenylalanine--tRNA ligase beta subunit (795 aa).

The tRNA-binding domain occupies 39-148 (AGDFSGVVVG…QNAPVGTNLR (110 aa)). The 76-residue stretch at 401–476 (PKLNQVSLRR…RIYGYNSIPN (76 aa)) folds into the B5 domain. Mg(2+) contacts are provided by Asp-454, Asp-460, Glu-463, and Glu-464. The region spanning 701-794 (SRFPANRRDL…LKQRFNAYLR (94 aa)) is the FDX-ACB domain.

It belongs to the phenylalanyl-tRNA synthetase beta subunit family. Type 1 subfamily. In terms of assembly, tetramer of two alpha and two beta subunits. Requires Mg(2+) as cofactor.

It localises to the cytoplasm. It catalyses the reaction tRNA(Phe) + L-phenylalanine + ATP = L-phenylalanyl-tRNA(Phe) + AMP + diphosphate + H(+). The polypeptide is Phenylalanine--tRNA ligase beta subunit (pheT) (Pasteurella multocida (strain Pm70)).